The chain runs to 739 residues: NAD(P)H-quinone oxidoreductase subunit 5, chloroplastic (739 aa).

Helical transmembrane passes span 9–29 (WVIP…LILI), 39–59 (IWAF…VQLS), 89–109 (IDPL…LVLI), 125–145 (FVYI…SNLI), 147–167 (IYFF…FWFT), 185–205 (GDFG…SLEF), 219–239 (NGIN…GAVA), 258–278 (TPIS…FLLA), 280–300 (LLPL…VGTI), 327–347 (LGYM…FHLI), 354–374 (ALLF…VGYS), 396–416 (TTFL…CFWS), 425–445 (WLYS…TAFY), 542–562 (LFPL…GISF), 610–630 (TLAI…YSFF), and 719–739 (ISSY…FFLS).

This sequence belongs to the complex I subunit 5 family. As to quaternary structure, NDH is composed of at least 16 different subunits, 5 of which are encoded in the nucleus.

It localises to the plastid. Its subcellular location is the chloroplast thylakoid membrane. The enzyme catalyses a plastoquinone + NADH + (n+1) H(+)(in) = a plastoquinol + NAD(+) + n H(+)(out). It catalyses the reaction a plastoquinone + NADPH + (n+1) H(+)(in) = a plastoquinol + NADP(+) + n H(+)(out). Its function is as follows. NDH shuttles electrons from NAD(P)H:plastoquinone, via FMN and iron-sulfur (Fe-S) centers, to quinones in the photosynthetic chain and possibly in a chloroplast respiratory chain. The immediate electron acceptor for the enzyme in this species is believed to be plastoquinone. Couples the redox reaction to proton translocation, and thus conserves the redox energy in a proton gradient. This Hordeum vulgare (Barley) protein is NAD(P)H-quinone oxidoreductase subunit 5, chloroplastic (ndhF).